Here is an 849-residue protein sequence, read N- to C-terminus: Alanine--tRNA ligase (849 aa).

Residues His551, His555, Cys653, and His657 each contribute to the Zn(2+) site.

This sequence belongs to the class-II aminoacyl-tRNA synthetase family. Zn(2+) serves as cofactor.

It localises to the cytoplasm. It carries out the reaction tRNA(Ala) + L-alanine + ATP = L-alanyl-tRNA(Ala) + AMP + diphosphate. Catalyzes the attachment of alanine to tRNA(Ala) in a two-step reaction: alanine is first activated by ATP to form Ala-AMP and then transferred to the acceptor end of tRNA(Ala). Also edits incorrectly charged Ser-tRNA(Ala) and Gly-tRNA(Ala) via its editing domain. The sequence is that of Alanine--tRNA ligase from Sulfurimonas denitrificans (strain ATCC 33889 / DSM 1251) (Thiomicrospira denitrificans (strain ATCC 33889 / DSM 1251)).